Consider the following 329-residue polypeptide: uncharacterized protein (329 aa).

Coiled-coil stretches lie at residues 57–120 (KKEE…QEVT) and 225–251 (QRQR…GNMM).

This is an uncharacterized protein from Homo sapiens (Human).